Consider the following 317-residue polypeptide: Porphobilinogen deaminase (317 aa).

Residue Cys-245 is modified to S-(dipyrrolylmethanemethyl)cysteine.

This sequence belongs to the HMBS family. In terms of assembly, monomer. It depends on dipyrromethane as a cofactor.

The catalysed reaction is 4 porphobilinogen + H2O = hydroxymethylbilane + 4 NH4(+). Its pathway is porphyrin-containing compound metabolism; protoporphyrin-IX biosynthesis; coproporphyrinogen-III from 5-aminolevulinate: step 2/4. It participates in porphyrin-containing compound metabolism; chlorophyll biosynthesis. In terms of biological role, tetrapolymerization of the monopyrrole PBG into the hydroxymethylbilane pre-uroporphyrinogen in several discrete steps. This is Porphobilinogen deaminase from Prochlorococcus marinus (strain MIT 9303).